An 87-amino-acid polypeptide reads, in one-letter code: DNA-directed RNA polymerase subunit omega (87 aa).

The protein belongs to the RNA polymerase subunit omega family. The RNAP catalytic core consists of 2 alpha, 1 beta, 1 beta' and 1 omega subunit. When a sigma factor is associated with the core the holoenzyme is formed, which can initiate transcription.

It carries out the reaction RNA(n) + a ribonucleoside 5'-triphosphate = RNA(n+1) + diphosphate. Promotes RNA polymerase assembly. Latches the N- and C-terminal regions of the beta' subunit thereby facilitating its interaction with the beta and alpha subunits. In Acidothermus cellulolyticus (strain ATCC 43068 / DSM 8971 / 11B), this protein is DNA-directed RNA polymerase subunit omega.